A 188-amino-acid chain; its full sequence is dCTP deaminase (188 aa).

DCTP-binding positions include 111–116 (KSTYAR), 135–137 (TLE), glutamine 156, tyrosine 170, and glutamine 180. Glutamate 137 (proton donor/acceptor) is an active-site residue.

The protein belongs to the dCTP deaminase family. As to quaternary structure, homotrimer.

The catalysed reaction is dCTP + H2O + H(+) = dUTP + NH4(+). It participates in pyrimidine metabolism; dUMP biosynthesis; dUMP from dCTP (dUTP route): step 1/2. Its function is as follows. Catalyzes the deamination of dCTP to dUTP. This Thioalkalivibrio sulfidiphilus (strain HL-EbGR7) protein is dCTP deaminase.